Reading from the N-terminus, the 262-residue chain is Nurim (262 aa).

At 1–4 (MAPA) the chain is on the nuclear side. The chain crosses the membrane as a helical span at residues 5 to 28 (LLLVPAALASFVLAFGTGVEFVRF). Residues 29–58 (TSLRPLLGGIPESGGPDARHGWLAALQDRS) lie on the Perinuclear space side of the membrane. The chain crosses the membrane as a helical span at residues 59-80 (ILASLAWDLCLLLLFVVQHSLM). The Nuclear segment spans residues 81–97 (ATEAVKAWTSRYFGVLQ). Residues 98-114 (RSLYVACTALALQLVMR) traverse the membrane as a helical segment. The Perinuclear space segment spans residues 115–133 (YWEATPRGPVLWEARAEPW). The chain crosses the membrane as a helical span at residues 134–164 (ATWVPLLCFVLHVVSWLLIFSILLVFDYAEL). Over 165 to 191 (MGLKQVYYHVLGLGEPLSLKSPRALRL) the chain is Nuclear. Residues 192-210 (FSHLRHPVCVELLTVLWVV) form a helical membrane-spanning segment. Topologically, residues 211 to 216 (PTLGTD) are perinuclear space. Residues 217–234 (RLLLALLFTLYLGLAHGL) form a helical membrane-spanning segment. Residues 235 to 262 (DQQDLRYLRSQLQRKLQLLSRPQDGEAE) are Nuclear-facing.

It belongs to the nurim family.

The protein resides in the nucleus inner membrane. The sequence is that of Nurim (Nrm) from Rattus norvegicus (Rat).